The chain runs to 123 residues: Basic myotoxic phospholipase A2 PhTX-II (123 aa).

7 cysteine pairs are disulfide-bonded: cysteine 26–cysteine 116, cysteine 28–cysteine 45, cysteine 44–cysteine 95, cysteine 50–cysteine 123, cysteine 51–cysteine 88, cysteine 58–cysteine 81, and cysteine 75–cysteine 86. Ca(2+)-binding residues include tyrosine 27, glycine 29, and glycine 31. The active site involves histidine 48. Residue aspartate 49 coordinates Ca(2+). The active site involves aspartate 89.

Monomer. Ca(2+) serves as cofactor. Expressed by the venom gland.

The protein resides in the secreted. The enzyme catalyses a 1,2-diacyl-sn-glycero-3-phosphocholine + H2O = a 1-acyl-sn-glycero-3-phosphocholine + a fatty acid + H(+). With respect to regulation, P-bromophenacyl bromide (BPB) completely inhibits the catalytic and edematogenic activities. Enzymatic activity is also diminished by EDTA, heparin and crotapotins F2 and F3 from C.d.collilineatus. Inhibited by divalent cations different from calcium ions (cadmium, magnesium, manganese, zinc), since they act as competitive antagonists of this cofactor. In terms of biological role, snake venom phospholipase A2 (PLA2) that induces myotoxicity and local edema in mice. In addition, it causes neuromuscular blockade in avian neuromuscular preparations with a significant direct action on skeletal muscle function. Myotoxic action is exerted by both enzymatic and non-enzymatic mechanisms. PLA2 catalyzes the calcium-dependent hydrolysis of the 2-acyl groups in 3-sn-phosphoglycerides. In Bothrocophias hyoprora (Amazonian hognose viper), this protein is Basic myotoxic phospholipase A2 PhTX-II.